A 603-amino-acid chain; its full sequence is MVIHKKIAVVDFGGQYAHLIASRIRRLGAYTEILSNEEPISNYQKYSGIILSGGPESVYEPNSPTVTTRIFDLGIPILGICYGHQLIMKLLGGVVERSGTGEYGPASLQLHGTNGNSILKNFVGGEQVWMNHADEVVKLPEGFSKIAFSKDCGYAVVANSSKKIFGIQFHAEVSHSEKGSVLLDNFIQICGVSKTWGIDQFLKEKIKEIQETVKQEQKIFMLVSGGVDSTVSYLLLCKALGAERVLGFLIDTGFMRKDEVVSLQKKLTFQNIHLTVRDESSLFYKSLKDKSDPEEKRKIVGNLFLEARDRAVKDLDLEYGDWLLGQGTIYPDTIESGGTKHSHTIKTHHNRVEAIQKLIEQGKVIEPIRDLYKDEVRDLGVLLGLESEWVGRHPFPGPGLVVRMLAVEKKGTDKDQLEIDSYLSTQDGLSGKILPIASVGVKGDRRSYANCVVLNDIETDWNTLDRVATHLSNRFSFINRVVLLPFESDLKKWNFQFTGMQLDKKCSDLLREADFTVESVIRKLGLYNKIWQMPVVLLPIGEKENEKSIVLRPVESQEAMTANFFRMERSVLQEIKIEVLKIPEIRYLFFDLTNKPPGTIEWE.

Residues 6–195 form the Glutamine amidotransferase type-1 domain; the sequence is KIAVVDFGGQ…FIQICGVSKT (190 aa). Cys-81 (nucleophile) is an active-site residue. Residues His-170 and Glu-172 contribute to the active site. In terms of domain architecture, GMPS ATP-PPase spans 196-392; the sequence is WGIDQFLKEK…LGLESEWVGR (197 aa). Position 224 to 230 (224 to 230) interacts with ATP; sequence SGGVDST.

In terms of assembly, homodimer.

The enzyme catalyses XMP + L-glutamine + ATP + H2O = GMP + L-glutamate + AMP + diphosphate + 2 H(+). Its pathway is purine metabolism; GMP biosynthesis; GMP from XMP (L-Gln route): step 1/1. Functionally, catalyzes the synthesis of GMP from XMP. The polypeptide is Probable GMP synthase [glutamine-hydrolyzing] (guaA) (Leptospira interrogans serogroup Icterohaemorrhagiae serovar copenhageni (strain Fiocruz L1-130)).